Reading from the N-terminus, the 543-residue chain is Zinc finger CCHC domain-containing protein 7 (543 aa).

The segment at 51–71 is disordered; that stretch reads EEEHEEKNSGNSESSSSKPNQ. Residues 59–68 are compositionally biased toward low complexity; the sequence is SGNSESSSSK. Glycyl lysine isopeptide (Lys-Gly) (interchain with G-Cter in SUMO2) cross-links involve residues lysine 131, lysine 139, lysine 141, lysine 239, and lysine 254. 3 CCHC-type zinc fingers span residues 241 to 258, 263 to 280, and 304 to 321; these read IICR…NCPL, RRCF…SCPA, and KQCD…ACTE. Residue lysine 339 forms a Glycyl lysine isopeptide (Lys-Gly) (interchain with G-Cter in SUMO2) linkage. The CCHC-type 4 zinc finger occupies 348–365; it reads AYCYHCAQKGHYGHECPE. Glycyl lysine isopeptide (Lys-Gly) (interchain with G-Cter in SUMO2) cross-links involve residues lysine 412, lysine 417, and lysine 435. Residues 414–543 are disordered; it reads PYIKAANENP…FLIKQRKKKS (130 aa). 2 stretches are compositionally biased toward basic and acidic residues: residues 441–457 and 465–475; these read QENK…NRNW and RHREVDEDFPR. Lysine 478 is covalently cross-linked (Glycyl lysine isopeptide (Lys-Gly) (interchain with G-Cter in SUMO2)). A compositionally biased stretch (polar residues) spans 479–491; the sequence is TYSSPGSFKTQKP. 2 positions are modified to phosphoserine: serine 482 and serine 485. Residues lysine 487, lysine 490, and lysine 493 each participate in a glycyl lysine isopeptide (Lys-Gly) (interchain with G-Cter in SUMO2) cross-link. The span at 493–502 shows a compositional bias: basic residues; sequence KPFHRSSHYH. Residues 503–515 are compositionally biased toward basic and acidic residues; sequence TSREDKSPKEGKR. Residue lysine 537 forms a Glycyl lysine isopeptide (Lys-Gly) (interchain with G-Cter in SUMO2) linkage.

As to quaternary structure, component of a nucleolar TRAMP-like complex, an ATP-dependent exosome regulatory complex consisting of a helicase (MTREX), an oligadenylate polymerase (TENT4B or TENT4A), and a substrate specific RNA-binding factor (ZCCHC7 or ZCCHC8). Several TRAMP-like complexes exist with specific compositions and are associated with nuclear, or nucleolar RNA exosomes.

The protein localises to the nucleus. Its subcellular location is the nucleolus. The sequence is that of Zinc finger CCHC domain-containing protein 7 (ZCCHC7) from Homo sapiens (Human).